We begin with the raw amino-acid sequence, 332 residues long: Ribose-phosphate pyrophosphokinase (332 aa).

Residue 57–59 (DGE) coordinates ATP. The Mg(2+) site is built by H150 and D189. K213 is an active-site residue. D-ribose 5-phosphate is bound by residues R215, D239, and 243 to 247 (DTAGT).

This sequence belongs to the ribose-phosphate pyrophosphokinase family. Class I subfamily. Homohexamer. The cofactor is Mg(2+).

The protein localises to the cytoplasm. The enzyme catalyses D-ribose 5-phosphate + ATP = 5-phospho-alpha-D-ribose 1-diphosphate + AMP + H(+). It participates in metabolic intermediate biosynthesis; 5-phospho-alpha-D-ribose 1-diphosphate biosynthesis; 5-phospho-alpha-D-ribose 1-diphosphate from D-ribose 5-phosphate (route I): step 1/1. Functionally, involved in the biosynthesis of the central metabolite phospho-alpha-D-ribosyl-1-pyrophosphate (PRPP) via the transfer of pyrophosphoryl group from ATP to 1-hydroxyl of ribose-5-phosphate (Rib-5-P). The polypeptide is Ribose-phosphate pyrophosphokinase (Gloeobacter violaceus (strain ATCC 29082 / PCC 7421)).